Here is a 421-residue protein sequence, read N- to C-terminus: Phosphatidate cytidylyltransferase 1 (421 aa).

An N-acetylmethionine modification is found at Met1. A compositionally biased stretch (polar residues) spans 1–12; it reads MEEENVTSSPST. The tract at residues 1 to 26 is disordered; it reads MEEENVTSSPSTPVHRLRHRRRSNEV. A run of 8 helical transmembrane segments spans residues 60–80, 102–122, 149–169, 183–203, 206–226, 246–266, 321–341, and 369–389; these read IGGF…MVVV, LPYI…FVYG, YHMA…ILTL, WTHM…ANIF, IFWF…AYIF, GFIG…NILG, LCLG…ASGF, and VMAV…SVSV.

This sequence belongs to the CDS family. Mg(2+) serves as cofactor.

It localises to the membrane. It catalyses the reaction a 1,2-diacyl-sn-glycero-3-phosphate + CTP + H(+) = a CDP-1,2-diacyl-sn-glycerol + diphosphate. The protein operates within phospholipid metabolism; CDP-diacylglycerol biosynthesis; CDP-diacylglycerol from sn-glycerol 3-phosphate: step 3/3. Its function is as follows. May be involved in the synthesis of minor phospholipids and in modulation of IP3-mediated signal transduction. In Arabidopsis thaliana (Mouse-ear cress), this protein is Phosphatidate cytidylyltransferase 1.